The following is a 1891-amino-acid chain: MIFQSFLLGNLVSLCMKIINSVVVVGLYYGFLTTFSIGPSYLFLLRALVMEEGTEKKVSATTGFITGQLMMFISIYYAPLHLALGRPHTITVLALPYLLFHFFWNNHKHFFDYGSTTRNSMRNLSIQCVFLNNLIFQLFNHFILPSSMLARLVNIYLFRCNNKILFVTSGFVGWLIGHILFMKWLGLVLVWIRQNHSIRSNKYIRSNKYLVLELRNSMARIFSILLFITCVYYLGRIPSPILTKKLKEASKTEERVESEEERDVEIETASEMKGTKQEQEGSTEEDPYPSPSLFSEEGWDPDKIDETEEIRVNGKDKIKDKFHSHLTETGYNNINTSNSPIYDYQDSYLNNNNTGNLENCKLQLLDKKNENQEQDLFWFQKPLVSLLFDYNRWNRPFRYIKNNRFEQAVRTEMSQYFFDTCKSDGKQKISFTYPPSLSTFWKMIKRKIPLLSLQKTLPNELDTQWVSTNKEKSNNLNKEFLNRLEILDKESLSLDILETRTRFCNDDTKKEYVPKMYDPLLNGLYRGTIKKGVSSSIINNTLLENWEKRVRLNRIHTIFLPNIDYQEFEQKAYTIDKKPLSTEIDEFLTLINELGNEAKSSLNLKGLSLFSDQEQRRANSEKRTKFVKFVFNALDPNETKSGKKSIGIKEISKKVPRWSHKLITELDQQMGEFKDRASMDHQLRSRKAKRVVIFTDNKATKDAEEEVALISYSQQSDFRRGIITGSMRAQRRKTFISKLFQANVHSPLFVDRITPLRLFSFDISELIKPILKNWTDKEGEFKILESREEQTKREEKKEKDKKEDNKRKEQARIAIEEAWDTIPLAQIIRGYMLITQSILRKYILLPALIIAKNIGRMLFLQLPEWSEDLQEWNREMQIKCTYNGVQLSETEFPKNWLRDGIQIKILFPFCLKPWHISKLYPSRRELMKKQKQKDDFCFLTVWGMEAELPFGSPRKRPSFFEPIFKELEKKIGKFKKKYFLTLKILKGKTKLFRKVSKETTKLFIKSIGFLKKIKKELSKVNLIVLFRFKEISESNETKKEKDYLISNQIINESFRQIESGNWPNSSLIETKMKDLTNRTSTIKNKIERITKEKKKVTPEIDINPNKTNNIKKFESPKKIFQILKSRNTRVIWKFHYFLKLFIQRLYINLFLSIINIPRITTQLFLKSTNKLIEKFISNNEINQEKINNQKKIHFMFISTIKKSLYNISKKNSHILCDLSYLSQAYVFYKLSQTQVINFSKFRSVLQYNTTSCFLKTKIKDYFKTLGIFHSELKHKKLQSYRINQWKNWLRWHYQYDLSQIRWSRLMPKKWRTRVNQSCMAQNKNRNLNKWNSYEKDQLLHYKKENDSELYSLSNEKDNFKKCYGYGLLAYKSINYENKSDSFFSRLPFEVQVKKNLEISYNSNTSKHNFVDMPGNLHINNYLRKGNILDRERNLDRKYFDWKIIHFSLRQKGDIEAWVKIDTNSNPNTKIGINNYQIIDKIEKKGVFYLTTHQNPEKTQKNSKKFFFDWMGMNEKIFNRPILNLEFWFFPEFVLLYNVYKIKPWIIPSKFLLFNLNTNKNVSQNKNQNFFLPSNKKIKIKNRSQEAKEPPSQRERGSDIENKGNLSPVFSKHQTDLEKDYVESDTKKGKNKKQYKSNTEAELDLFLKRYLLFQLRWNGALNQRMFENIKVYCLLLRLINPTKITISSIQRREMSLDIMLIQANLPLTDLMKKGVLIIEPIRLSVKDNGQFIMYQTIGISLIHKSKHQTNQRYREQRYVDKKNFDEFILQPQTQRINTEKTHFGLLVPENILWSRRRRELRIRSFFNSWNWNVVDRNSVFCNETNVKNWSQFLGERKPLYKDKNELIKFKFFFWPNYRLEDLACMNRYWFDTNNGSRFSILRIHMYPRLKIN.

6 helical membrane passes run 18 to 38, 64 to 84, 87 to 107, 124 to 144, 172 to 192, and 221 to 241; these read IINS…FSIG, FITG…HLAL, PHTI…WNNH, LSIQ…HFIL, VGWL…LVWI, and IFSI…PSPI. 3 disordered regions span residues 248–300, 788–807, and 1580–1607; these read EASK…EGWD, EEQT…DNKR, and KNRS…NLSP. Residues 256–268 are compositionally biased toward acidic residues; sequence VESEEERDVEIET. Positions 1582–1601 are enriched in basic and acidic residues; it reads RSQEAKEPPSQRERGSDIEN.

The protein belongs to the TIC214 family. Part of the Tic complex.

The protein resides in the plastid. It localises to the chloroplast inner membrane. Its function is as follows. Involved in protein precursor import into chloroplasts. May be part of an intermediate translocation complex acting as a protein-conducting channel at the inner envelope. In Solanum lycopersicum (Tomato), this protein is Protein TIC 214.